A 204-amino-acid chain; its full sequence is Ribonuclease HII (204 aa).

The 192-residue stretch at 13–204 folds into the RNase H type-2 domain; that stretch reads GPVAGCDEAG…VRRAARLHSS (192 aa). Positions 19, 20, and 113 each coordinate a divalent metal cation.

The protein belongs to the RNase HII family. It depends on Mn(2+) as a cofactor. Mg(2+) serves as cofactor.

It localises to the cytoplasm. The enzyme catalyses Endonucleolytic cleavage to 5'-phosphomonoester.. Endonuclease that specifically degrades the RNA of RNA-DNA hybrids. The chain is Ribonuclease HII from Cutibacterium acnes (strain DSM 16379 / KPA171202) (Propionibacterium acnes).